Here is a 125-residue protein sequence, read N- to C-terminus: Small ribosomal subunit protein uS13 (125 aa).

The disordered stretch occupies residues 93–125; the sequence is RKGLPVRGQRTKTNARTRKGPKRTVAGKKKAGR.

It belongs to the universal ribosomal protein uS13 family. Part of the 30S ribosomal subunit. Forms a loose heterodimer with protein S19. Forms two bridges to the 50S subunit in the 70S ribosome.

Its function is as follows. Located at the top of the head of the 30S subunit, it contacts several helices of the 16S rRNA. In the 70S ribosome it contacts the 23S rRNA (bridge B1a) and protein L5 of the 50S subunit (bridge B1b), connecting the 2 subunits; these bridges are implicated in subunit movement. Contacts the tRNAs in the A and P-sites. The polypeptide is Small ribosomal subunit protein uS13 (Paenarthrobacter aurescens (strain TC1)).